We begin with the raw amino-acid sequence, 186 residues long: Imidazoleglycerol-phosphate dehydratase (186 aa).

This sequence belongs to the imidazoleglycerol-phosphate dehydratase family.

The protein resides in the cytoplasm. The enzyme catalyses D-erythro-1-(imidazol-4-yl)glycerol 3-phosphate = 3-(imidazol-4-yl)-2-oxopropyl phosphate + H2O. It functions in the pathway amino-acid biosynthesis; L-histidine biosynthesis; L-histidine from 5-phospho-alpha-D-ribose 1-diphosphate: step 6/9. This chain is Imidazoleglycerol-phosphate dehydratase, found in Dictyoglomus thermophilum (strain ATCC 35947 / DSM 3960 / H-6-12).